A 554-amino-acid polypeptide reads, in one-letter code: Asparagine synthetase B [glutamine-hydrolyzing] (554 aa).

Cys2 (for GATase activity) is an active-site residue. A Glutamine amidotransferase type-2 domain is found at 2–186 (CSIFGVFDIK…AGSYLWSQDG (185 aa)). Residues 50-54 (RLSIV), 75-77 (NGE), and Asp99 each bind L-glutamine. ATP contacts are provided by residues Leu233, Val273, and 347–348 (SG).

The protein belongs to the asparagine synthetase family. Homodimer.

It carries out the reaction L-aspartate + L-glutamine + ATP + H2O = L-asparagine + L-glutamate + AMP + diphosphate + H(+). It participates in amino-acid biosynthesis; L-asparagine biosynthesis; L-asparagine from L-aspartate (L-Gln route): step 1/1. Its activity is regulated as follows. Glutamine-dependent asparagine synthesis activity can be inhibited by aspartic acid analogs (such as a sulfinate derivative and (2S,3R)-2-amino-3-methylsuccinate) in vitro; the inhibition is competitive with respect to aspartate. In terms of biological role, catalyzes the ATP-dependent conversion of aspartate into asparagine, using glutamine as a source of nitrogen. Can also use ammonia as the nitrogen source in vitro, albeit with lower efficiency. As nucleotide substrates, ATP and dATP are utilized at a similar rate in both the glutamine- and ammonia-dependent reactions, whereas GTP utilization is only 15% that of ATP, and CTP, UTP, ITP and XTP are very poor or not substrates. Also exhibits glutaminase activity. This Escherichia coli (strain K12) protein is Asparagine synthetase B [glutamine-hydrolyzing] (asnB).